Consider the following 80-residue polypeptide: Mitotic-spindle organizing protein 1 (80 aa).

Belongs to the MOZART1 family. As to quaternary structure, part of the gamma-tubulin complex.

Its subcellular location is the cytoplasm. The protein localises to the cytoskeleton. The protein resides in the microtubule organizing center. It is found in the spindle pole body. In terms of biological role, required for gamma-tubulin complex recruitment to the microtubule organizing center (MTOC). This Pyricularia oryzae (strain 70-15 / ATCC MYA-4617 / FGSC 8958) (Rice blast fungus) protein is Mitotic-spindle organizing protein 1.